The sequence spans 129 residues: uncharacterized protein (129 aa).

This is an uncharacterized protein from Homo sapiens (Human).